A 542-amino-acid polypeptide reads, in one-letter code: Chaperonin GroEL 2 (542 aa).

ATP-binding positions include 30–33 (TLGP), Lys51, 87–91 (DGTTT), Gly415, and Asp494.

This sequence belongs to the chaperonin (HSP60) family. As to quaternary structure, forms a cylinder of 14 subunits composed of two heptameric rings stacked back-to-back. Interacts with the co-chaperonin GroES.

The protein localises to the cytoplasm. It carries out the reaction ATP + H2O + a folded polypeptide = ADP + phosphate + an unfolded polypeptide.. Together with its co-chaperonin GroES, plays an essential role in assisting protein folding. The GroEL-GroES system forms a nano-cage that allows encapsulation of the non-native substrate proteins and provides a physical environment optimized to promote and accelerate protein folding. The chain is Chaperonin GroEL 2 from Syntrophobacter fumaroxidans (strain DSM 10017 / MPOB).